The primary structure comprises 54 residues: Ductus ejaculatorius peptide 99B (54 aa).

A signal peptide spans 1 to 21 (MKTPLFLLLVVLASLLGLALS). Position 22 is a pyrrolidone carboxylic acid (Gln-22). N-linked (GlcNAc...) asparagine glycosylation is present at Asn-25. A disulfide bridge connects residues Cys-40 and Cys-52. Positions 53–54 (RK) are excised as a propeptide.

This sequence to paragonial peptide B. In terms of tissue distribution, ductus ejaculatorius.

Its subcellular location is the secreted. In terms of biological role, induces post-mating responses; increased oviposition and reduced receptivity. The sequence is that of Ductus ejaculatorius peptide 99B (Dup99B) from Drosophila melanogaster (Fruit fly).